The sequence spans 450 residues: UDP-N-acetylmuramoylalanine--D-glutamate ligase (450 aa).

118-124 serves as a coordination point for ATP; it reads GSNAKST.

Belongs to the MurCDEF family.

It is found in the cytoplasm. It catalyses the reaction UDP-N-acetyl-alpha-D-muramoyl-L-alanine + D-glutamate + ATP = UDP-N-acetyl-alpha-D-muramoyl-L-alanyl-D-glutamate + ADP + phosphate + H(+). The protein operates within cell wall biogenesis; peptidoglycan biosynthesis. Functionally, cell wall formation. Catalyzes the addition of glutamate to the nucleotide precursor UDP-N-acetylmuramoyl-L-alanine (UMA). This Pseudomonas putida (strain ATCC 47054 / DSM 6125 / CFBP 8728 / NCIMB 11950 / KT2440) protein is UDP-N-acetylmuramoylalanine--D-glutamate ligase.